A 364-amino-acid polypeptide reads, in one-letter code: Tyrosine--tRNA ligase (364 aa).

Positions 41, 167, 171, 174, and 189 each coordinate L-tyrosine. The 'KMSKS' region signature appears at 238–242 (KMSKS). Lys241 serves as a coordination point for ATP.

This sequence belongs to the class-I aminoacyl-tRNA synthetase family. TyrS type 4 subfamily. In terms of assembly, homodimer.

It is found in the cytoplasm. The enzyme catalyses tRNA(Tyr) + L-tyrosine + ATP = L-tyrosyl-tRNA(Tyr) + AMP + diphosphate + H(+). Functionally, catalyzes the attachment of tyrosine to tRNA(Tyr) in a two-step reaction: tyrosine is first activated by ATP to form Tyr-AMP and then transferred to the acceptor end of tRNA(Tyr). In Sulfurisphaera tokodaii (strain DSM 16993 / JCM 10545 / NBRC 100140 / 7) (Sulfolobus tokodaii), this protein is Tyrosine--tRNA ligase.